The sequence spans 135 residues: Glutaredoxin-C3 (135 aa).

A Glutaredoxin domain is found at 26–134; it reads VARVERLASE…PLLKEAGALW (109 aa). Cys46 and Cys49 are oxidised to a cystine. The Responsive for interaction with TGA factors motif lies at 132–135; sequence ALWL.

This sequence belongs to the glutaredoxin family. CC-type subfamily.

It localises to the cytoplasm. The protein resides in the nucleus. Has a glutathione-disulfide oxidoreductase activity in the presence of NADPH and glutathione reductase. Reduces low molecular weight disulfides and proteins. In Oryza sativa subsp. japonica (Rice), this protein is Glutaredoxin-C3 (GRXC3).